The chain runs to 434 residues: Serine--tRNA ligase (434 aa).

L-serine is bound at residue 239 to 241; it reads TAE. Residue 270 to 272 coordinates ATP; that stretch reads RSE. An L-serine-binding site is contributed by E293. 357–360 contributes to the ATP binding site; the sequence is EISS. S392 provides a ligand contact to L-serine.

It belongs to the class-II aminoacyl-tRNA synthetase family. Type-1 seryl-tRNA synthetase subfamily. As to quaternary structure, homodimer. The tRNA molecule binds across the dimer.

The protein localises to the cytoplasm. It catalyses the reaction tRNA(Ser) + L-serine + ATP = L-seryl-tRNA(Ser) + AMP + diphosphate + H(+). It carries out the reaction tRNA(Sec) + L-serine + ATP = L-seryl-tRNA(Sec) + AMP + diphosphate + H(+). It functions in the pathway aminoacyl-tRNA biosynthesis; selenocysteinyl-tRNA(Sec) biosynthesis; L-seryl-tRNA(Sec) from L-serine and tRNA(Sec): step 1/1. Functionally, catalyzes the attachment of serine to tRNA(Ser). Is also able to aminoacylate tRNA(Sec) with serine, to form the misacylated tRNA L-seryl-tRNA(Sec), which will be further converted into selenocysteinyl-tRNA(Sec). This Cupriavidus taiwanensis (strain DSM 17343 / BCRC 17206 / CCUG 44338 / CIP 107171 / LMG 19424 / R1) (Ralstonia taiwanensis (strain LMG 19424)) protein is Serine--tRNA ligase.